The sequence spans 520 residues: Protein OS-9 homolog (520 aa).

The signal sequence occupies residues 1 to 23 (MIRRIRTLTPLLVLACAGSGAWA). Positions 121-135 (QVDNGNRDQTNGAES) are enriched in polar residues. Residues 121 to 144 (QVDNGNRDQTNGAESTSKEDEQRE) are disordered. One can recognise an MRH domain in the interval 161 to 302 (GKCMYYISGW…VIYTPRLCND (142 aa)). A disulfide bridge connects residues cysteine 163 and cysteine 176. A mannooligosaccharide derivative contacts are provided by tryptophan 170, tryptophan 171, glutamine 183, aspartate 257, arginine 263, glutamate 284, and tyrosine 290. 2 cysteine pairs are disulfide-bonded: cysteine 256/cysteine 288 and cysteine 271/cysteine 300. The interval 442-520 (GLVGTVDSND…SEEIFFKDEL (79 aa)) is disordered. Polar residues predominate over residues 461–471 (GSISQPAQGTT). The span at 473-499 (DKGESNAETGEEKKKADEKIDHYEPEK) shows a compositional bias: basic and acidic residues. The short motif at 517-520 (KDEL) is the Prevents secretion from ER element.

It belongs to the OS-9 family. As to quaternary structure, interacts with missfolded ER lumenal proteins.

It localises to the endoplasmic reticulum membrane. Functionally, lectin involved in the quality control of the secretory pathway. As a member of the endoplasmic reticulum-associated degradation lumenal (ERAD-L) surveillance system, targets misfolded endoplasmic reticulum lumenal glycoproteins for degradation. This is Protein OS-9 homolog (yos9) from Aspergillus fumigatus (strain ATCC MYA-4609 / CBS 101355 / FGSC A1100 / Af293) (Neosartorya fumigata).